The sequence spans 498 residues: MAAKSDGVLKMKKSDVAFTPLQNSEHSGSVQGLHPGAQPDSAGAGDADFANGESRCCGGGGSHSTCLRLSREQQKYTVWDCLWIVAAVAVYVADVGSDVWLSVDYYLEEDYWWFGLTLFFVVLGSFSVQLFSFRWFVHDFSTEDSAEAAADGSHMDGNKLLSGSASHGDVTAQHHPATPQRQASTASRNTTTNSTASTGLGPRGPKRPAYYTFCVWGSQSVIHILQLGQIWRYIHTIYLGVQSRQSAETERWRYYWRMVYEFADVSMLHLLATFLESAPQLVLQLCIIIQTHKLLAVQGCRLFIYYLLILAENAALSALWYLYRSPLATDAFAVPALCVIFSSFLTGVVFMLMYYAFFHPNGPRFGRSMSGHGLNLDPTAQFSTLPSEVATNSLRSNRGATATLERDAGKYSERDGCMPVFQVRPTVPSTPSSRAPRLEETVIKIDLCRNRYPAWERHVLDRSIRKAILAVDCSLTPPRLQYKDDALVQERLEYETTL.

The tract at residues 24 to 46 (SEHSGSVQGLHPGAQPDSAGAGD) is disordered. The next 2 helical transmembrane spans lie at 81-101 (CLWIVAAVAVYVADVGSDVWL) and 111-131 (YWWFGLTLFFVVLGSFSVQLF). Residues 166 to 203 (SHGDVTAQHHPATPQRQASTASRNTTTNSTASTGLGPR) are disordered. Residues 183-198 (ASTASRNTTTNSTAST) show a composition bias toward low complexity. Transmembrane regions (helical) follow at residues 302–322 (LFIYYLLILAENAALSALWYL) and 332–352 (FAVPALCVIFSSFLTGVVFML).

It belongs to the XK family.

It localises to the cell membrane. It catalyses the reaction a 1,2-diacyl-sn-glycero-3-phospho-L-serine(in) = a 1,2-diacyl-sn-glycero-3-phospho-L-serine(out). Functionally, phospholipid scramblase that promotes phosphatidylserine exposure on apoptotic cell surface. Phosphatidylserine is a specific marker only present at the surface of apoptotic cells and acts as a specific signal for engulfment. The polypeptide is XK-related protein 4 (Tetraodon nigroviridis (Spotted green pufferfish)).